A 508-amino-acid polypeptide reads, in one-letter code: Photosystem II CP47 reaction center protein (508 aa).

6 consecutive transmembrane segments (helical) span residues 21-36 (SVHI…WAGS), 101-115 (IVFS…IWHW), 140-156 (GIHL…FGAF), 203-218 (IAAG…FHLS), 237-252 (VLSS…AFVV), and 457-472 (SFAL…HGAR).

This sequence belongs to the PsbB/PsbC family. PsbB subfamily. As to quaternary structure, PSII is composed of 1 copy each of membrane proteins PsbA, PsbB, PsbC, PsbD, PsbE, PsbF, PsbH, PsbI, PsbJ, PsbK, PsbL, PsbM, PsbT, PsbX, PsbY, PsbZ, Psb30/Ycf12, at least 3 peripheral proteins of the oxygen-evolving complex and a large number of cofactors. It forms dimeric complexes. Binds multiple chlorophylls. PSII binds additional chlorophylls, carotenoids and specific lipids. is required as a cofactor.

It is found in the plastid. The protein localises to the chloroplast thylakoid membrane. Its function is as follows. One of the components of the core complex of photosystem II (PSII). It binds chlorophyll and helps catalyze the primary light-induced photochemical processes of PSII. PSII is a light-driven water:plastoquinone oxidoreductase, using light energy to abstract electrons from H(2)O, generating O(2) and a proton gradient subsequently used for ATP formation. The chain is Photosystem II CP47 reaction center protein from Barbarea verna (Land cress).